Here is a 280-residue protein sequence, read N- to C-terminus: uncharacterized protein (280 aa).

It to E.coli YgfZ (UP14) and B.aphidicola (subsp. Acyrthosiphon pisum) BU435.

This is an uncharacterized protein from Haemophilus influenzae (strain ATCC 51907 / DSM 11121 / KW20 / Rd).